Consider the following 453-residue polypeptide: BPI fold-containing family B member 6 (453 aa).

The N-terminal stretch at 1–18 is a signal peptide; that stretch reads MLRILCLALCSLLTGTRA. Asn114 carries an N-linked (GlcNAc...) asparagine glycan. Cys137 and Cys174 are disulfide-bonded. N-linked (GlcNAc...) asparagine glycosylation is present at Asn190.

It belongs to the BPI/LBP/Plunc superfamily. BPI/LBP family. Detected at very low levels in normal tonsils, and at higher levels in hypertrophic tonsils.

It localises to the secreted. This is BPI fold-containing family B member 6 (BPIFB6) from Homo sapiens (Human).